The primary structure comprises 840 residues: Protein translocase subunit SecA (840 aa).

Residues Gln-89, 107-111 (GEGKT), and Asp-514 contribute to the ATP site.

It belongs to the SecA family. In terms of assembly, monomer and homodimer. Part of the essential Sec protein translocation apparatus which comprises SecA, SecYEG and auxiliary proteins SecDF-YajC and YidC.

The protein resides in the cell inner membrane. The protein localises to the cytoplasm. The enzyme catalyses ATP + H2O + cellular proteinSide 1 = ADP + phosphate + cellular proteinSide 2.. Functionally, part of the Sec protein translocase complex. Interacts with the SecYEG preprotein conducting channel. Has a central role in coupling the hydrolysis of ATP to the transfer of proteins into and across the cell membrane, serving as an ATP-driven molecular motor driving the stepwise translocation of polypeptide chains across the membrane. The sequence is that of Protein translocase subunit SecA from Blochmanniella floridana.